Consider the following 291-residue polypeptide: Gamma-sarcoglycan (291 aa).

Residues 38-58 (LFVLLLLIILLVNFALTIWIL) traverse the membrane as a helical; Signal-anchor for type II membrane protein segment. The Extracellular segment spans residues 59 to 291 (KVMWFSPTGM…TCHEHSHICL (233 aa)). N-linked (GlcNAc...) asparagine glycosylation is present at asparagine 110. Cystine bridges form between cysteine 265–cysteine 290 and cysteine 267–cysteine 283.

This sequence belongs to the sarcoglycan beta/delta/gamma/zeta family. As to quaternary structure, interacts with the syntrophin SNTA1. Cross-link to form 2 major subcomplexes: one consisting of SGCB, SGCD and SGCG and the other consisting of SGCB and SGCD. The association between SGCB and SGCG is particularly strong while SGCA is loosely associated with the other sarcoglycans. Interacts with FLNC. Disulfide bonds are present.

It localises to the cell membrane. Its subcellular location is the sarcolemma. It is found in the cytoplasm. The protein localises to the cytoskeleton. Its function is as follows. Component of the sarcoglycan complex, a subcomplex of the dystrophin-glycoprotein complex which forms a link between the F-actin cytoskeleton and the extracellular matrix. This chain is Gamma-sarcoglycan (SGCG), found in Canis lupus familiaris (Dog).